A 715-amino-acid chain; its full sequence is Beta-galactosidase 9 (715 aa).

The N-terminal stretch at 1 to 20 (MSGGAVAFLLLVAAAAVANA) is a signal peptide. The Proton donor role is filled by glutamate 178. The active-site Nucleophile is glutamate 247.

The protein belongs to the glycosyl hydrolase 35 family.

It localises to the secreted. Its subcellular location is the extracellular space. The protein resides in the apoplast. It carries out the reaction Hydrolysis of terminal non-reducing beta-D-galactose residues in beta-D-galactosides.. This is Beta-galactosidase 9 from Oryza sativa subsp. japonica (Rice).